The following is a 265-amino-acid chain: Polyphosphate glucokinase (265 aa).

Polar residues predominate over residues 1-18; that stretch reads MTSTGPETSETPGATTQR. Residues 1-22 form a disordered region; it reads MTSTGPETSETPGATTQRHGFG. Residue 24 to 29 participates in ATP binding; it reads DVGGSG.

The protein belongs to the ROK (NagC/XylR) family. Homodimer.

It catalyses the reaction [phosphate](n) + D-glucose = [phosphate](n-1) + D-glucose 6-phosphate + H(+). The catalysed reaction is D-glucose + ATP = D-glucose 6-phosphate + ADP + H(+). In terms of biological role, catalyzes the phosphorylation of glucose using polyphosphate or ATP as the phosphoryl donor. Polyphosphate, rather than ATP, seems to be the major phosphate donor for the enzyme in M.tuberculosis. This Mycobacterium tuberculosis (strain CDC 1551 / Oshkosh) protein is Polyphosphate glucokinase (ppgK).